We begin with the raw amino-acid sequence, 551 residues long: Palmdelphin (551 aa).

At M1 the chain carries N-acetylmethionine. Residues Q12–I106 are a coiled coil. Residue K125 forms a Glycyl lysine isopeptide (Lys-Gly) (interchain with G-Cter in SUMO2) linkage. At S135 the chain carries Phosphoserine. K179 is covalently cross-linked (Glycyl lysine isopeptide (Lys-Gly) (interchain with G-Cter in SUMO1); alternate). A Glycyl lysine isopeptide (Lys-Gly) (interchain with G-Cter in SUMO2); alternate cross-link involves residue K179. Basic and acidic residues predominate over residues E248 to E259. A disordered region spans residues E248–G280. Over residues T270–G280 the composition is skewed to polar residues. T271 is subject to Phosphothreonine. Residues S321, S370, S384, and S385 each carry the phosphoserine modification. Disordered regions lie at residues T342–E392 and D449–S535. The span at K484 to N495 shows a compositional bias: basic and acidic residues. S498, S515, and S520 each carry phosphoserine.

It belongs to the paralemmin family. As to quaternary structure, interacts with GLUL. Post-translationally, phosphorylated. Ubiquitous. Most abundant in cardiac and skeletal muscle.

It localises to the cytoplasm. The protein localises to the cell projection. The protein resides in the dendrite. Its subcellular location is the dendritic spine. This chain is Palmdelphin (PALMD), found in Homo sapiens (Human).